Consider the following 428-residue polypeptide: Serine--tRNA ligase (428 aa).

231-233 (TAE) is an L-serine binding site. ATP contacts are provided by residues 262–264 (RRE) and Val278. Glu285 is an L-serine binding site. An ATP-binding site is contributed by 349–352 (EVSS). An L-serine-binding site is contributed by Ser384.

It belongs to the class-II aminoacyl-tRNA synthetase family. Type-1 seryl-tRNA synthetase subfamily. Homodimer. The tRNA molecule binds across the dimer.

The protein resides in the cytoplasm. The catalysed reaction is tRNA(Ser) + L-serine + ATP = L-seryl-tRNA(Ser) + AMP + diphosphate + H(+). It catalyses the reaction tRNA(Sec) + L-serine + ATP = L-seryl-tRNA(Sec) + AMP + diphosphate + H(+). It participates in aminoacyl-tRNA biosynthesis; selenocysteinyl-tRNA(Sec) biosynthesis; L-seryl-tRNA(Sec) from L-serine and tRNA(Sec): step 1/1. In terms of biological role, catalyzes the attachment of serine to tRNA(Ser). Is also able to aminoacylate tRNA(Sec) with serine, to form the misacylated tRNA L-seryl-tRNA(Sec), which will be further converted into selenocysteinyl-tRNA(Sec). This is Serine--tRNA ligase from Chlamydia trachomatis serovar A (strain ATCC VR-571B / DSM 19440 / HAR-13).